The primary structure comprises 460 residues: V-type ATP synthase beta chain (460 aa).

The protein belongs to the ATPase alpha/beta chains family.

Functionally, produces ATP from ADP in the presence of a proton gradient across the membrane. The V-type beta chain is a regulatory subunit. The sequence is that of V-type ATP synthase beta chain from Clostridium perfringens (strain ATCC 13124 / DSM 756 / JCM 1290 / NCIMB 6125 / NCTC 8237 / Type A).